A 333-amino-acid polypeptide reads, in one-letter code: Transaldolase (333 aa).

Lys136 acts as the Schiff-base intermediate with substrate in catalysis.

This sequence belongs to the transaldolase family. Type 1 subfamily. In terms of assembly, homodimer.

Its subcellular location is the cytoplasm. The catalysed reaction is D-sedoheptulose 7-phosphate + D-glyceraldehyde 3-phosphate = D-erythrose 4-phosphate + beta-D-fructose 6-phosphate. It participates in carbohydrate degradation; pentose phosphate pathway; D-glyceraldehyde 3-phosphate and beta-D-fructose 6-phosphate from D-ribose 5-phosphate and D-xylulose 5-phosphate (non-oxidative stage): step 2/3. Functionally, transaldolase is important for the balance of metabolites in the pentose-phosphate pathway. In Acidobacterium capsulatum (strain ATCC 51196 / DSM 11244 / BCRC 80197 / JCM 7670 / NBRC 15755 / NCIMB 13165 / 161), this protein is Transaldolase.